The sequence spans 1807 residues: MAGLCSSPWVKLLLAVVLSAGLPGNMANRCKKAQVKSCTECIRVDKSCAYCTDELFKERRCNTQADVLAAGCRGESVLVMESSLEITENIQIDTSLHRSQVSPQGLQVRLRPGEERNFVFKVFEPLESPVDLYILMDFSNSMSDDLDNLKQMGQNLAKILRQLTSDYTIGFGKFVDKVSVPQTDMRPEKLKEPWPNSDPPFSFKNVISLTENVEEFWDKLQGERISGNLDAPEGGFDAILQTAVCTRDIGWRADSTHLLVFSTESAFHYEADGANVLAGIMNRNDEKCHLDATGAYTQYKTQDYPSVPTLVRLLAKHNIIPIFAVTNYSYSYYEKLHKYFPVSSLGVLQEDSSNIVELLEEAFYRIRSNLDIRALDSPRGLRTEVTSDTLQKTETGSFHIKRGEVGTYNVHLRAVEDIDGTHVCQLAKEDQRGNIHLKPSFSDGLRMDASVICDMCACELQKEVQSARCHYRGDFMCGHCVCNEGWSGKTCNCSTGSLSDTQPCLREGEDKPCSGHGECQCGRCVCYGEGRYEGHFCEYDNFQCPRTSGFLCNDRGRCSMGECVCEPGWTGRSCDCPLSNATCIDSNGGICNGLGFCECGRCHCNQRSSLYTDTTCEINYSAIRLGLCEDLRSCVQCQAWGTGEKKGRTCEECNFKVKMVDELKKAEEVVEYCSFRDEDDDCTYSYTVEGDGSPGPNSTVLVHKKKDCLPAPSWWLIPLLIFLLLLLVLLLLLCWKYCACCKACLGLLPCCNQGHMVGFKEDHYMLRENLMASDHLDTPMLRSGNLKGRDTVRWKITNNVQRPGFATHAASISPTELVPYGLSLRLGRLCTENLMKPGTRECDQLRQEVEENLNEVYRQVNGVHKLQQTKFRQQPNAGKKQDHTIVDTVLLAPRSAKQSLLKLTEKQVEQGSFHELKVAPGYYTLTAEQDARGMVEFQEGVELVDVRVPLFIRPEDDDEKQLLVEAIDVPVGTATLGRRLVNITIIKEQASGIVSFEQPEYSVSRGDQVARIPVIRHILDNGKSQVSYSTQDNTAHGHRDYVPVEGELLFYPGETWKELQVKLLELQEVDSLLRGRQVRRFQVQLSNPKFGARLGQPNTATVIIGEQDETDRSLINEISASPPLPRGDLGAPQNPNAKAAGSRKIHFNWLPPPGKPMGYRVKYWVQGDSESEAHLLDSKVPSVELTNLYPYCDYEMKVCAYGAHGEGPYSSLVSCRTHQEVPSEPGRLAFNVVSSTVTQLSWAEPAETNGEITAYEVCYGLVNEDNRPIGPMKKVLVDNPKNRMLLIENLRESQPYRYTVKARNGAGWGPEREAIINLATQPKRPMSIPIIPDIPIVDAQGGEDYENFLMYSDDVLRSPASSQRPSVSDDTEHLVNGRMDFAYPGSANSLHRMTAANVAYGTHLSPHQTHRMLSTSSTLTRDYHSLTRTDHSQSGTLPRDYSTLTSLSSQGLPPIWEDGRSRLPLSWTLGSWSRAQMKGVPASRGSPDSIILAGQSAAPSWGTDSRGAMGVPDTPTRLVFSALGPTSLKVSWQEPQCDRALLGYSVEYQLLNGGEMHRLNIPNPGQTSVVVEDLLPNHSYVFRVRAQSQEGWGREREGVITIESQVHPQSPLCPLPGSAFTLSTPSAPGPLVFTALSPDSLQLSWERPRRPNGDILGYLVTCEMAQGGGPARTFRVDGDNPESRLTVPGLSENVPYKFKVQARTTEGFGPEREGIITIESQDGGPFPQLGSHSGLFQNPLQSEYSTVTSTHSTTTTEPFLIDGLTLGTQRLEAGGSLTRHVTQEFVSRTLTTSGSLSTHMDQQFFQT.

The N-terminal stretch at 1–27 (MAGLCSSPWVKLLLAVVLSAGLPGNMA) is a signal peptide. Topologically, residues 28–713 (NRCKKAQVKS…KKKDCLPAPS (686 aa)) are extracellular. The 45-residue stretch at 29 to 73 (RCKKAQVKSCTECIRVDKSCAYCTDELFKERRCNTQADVLAAGCR) folds into the PSI domain. 8 disulfides stabilise this stretch: Cys-30/Cys-48, Cys-38/Cys-456, Cys-41/Cys-61, Cys-51/Cys-72, Cys-245/Cys-288, Cys-458/Cys-477, Cys-469/Cys-480, and Cys-482/Cys-491. Residues 131–340 (DLYILMDFSN…SYYEKLHKYF (210 aa)) form the VWFA domain. The Mg(2+) site is built by Ser-139 and Ser-141. The Ca(2+) site is built by Ser-141, Asp-144, Asp-145, and Asp-176. Positions 194 to 199 (WPNSDP) are involved in NRG1- and IGF1-binding. Asn-228, Asp-230, Pro-232, and Glu-233 together coordinate Ca(2+). Glu-233 contacts Mg(2+). Asn-327 carries N-linked (GlcNAc...) asparagine glycosylation. Glu-350 provides a ligand contact to Ca(2+). I-EGF domains are found at residues 458–492 (CELQKEVQSARCHYRGDFMCGHCVCNEGWSGKTCN), 493–538 (CSTG…HFCE), 539–575 (YDNFQCPRTSGFLCNDRGRCSMGECVCEPGWTGRSCD), and 576–617 (CPLS…TTCE). Asn-492 carries an N-linked (GlcNAc...) asparagine glycan. 11 disulfides stabilise this stretch: Cys-493–Cys-521, Cys-504–Cys-519, Cys-513–Cys-524, Cys-526–Cys-537, Cys-544–Cys-558, Cys-552–Cys-563, Cys-565–Cys-574, Cys-576–Cys-599, Cys-583–Cys-597, Cys-591–Cys-602, and Cys-604–Cys-616. Asn-580 is a glycosylation site (N-linked (GlcNAc...) asparagine). Asn-619 carries N-linked (GlcNAc...) asparagine glycosylation. 4 disulfide bridges follow: Cys-628–Cys-673, Cys-634–Cys-653, Cys-637–Cys-650, and Cys-682–Cys-708. An N-linked (GlcNAc...) asparagine glycan is attached at Asn-697. The chain crosses the membrane as a helical span at residues 714-734 (WWLIPLLIFLLLLLVLLLLLC). Residues 734-751 (CWKYCACCKACLGLLPCC) are palmitoylated on several cysteines. The Cytoplasmic segment spans residues 735 to 1807 (WKYCACCKAC…THMDQQFFQT (1073 aa)). Phosphoserine occurs at positions 773, 1071, and 1121. The region spanning 981–1086 (VNITIIKEQA…QVRRFQVQLS (106 aa)) is the Calx-beta domain. Positions 1119 to 1141 (SASPPLPRGDLGAPQNPNAKAAG) are disordered. Fibronectin type-III domains follow at residues 1131–1220 (APQN…THQE) and 1224–1323 (EPGR…TQPK). Phosphoserine is present on residues Ser-1386, Ser-1389, and Ser-1405. Thr-1418 is modified (phosphothreonine). The residue at position 1425 (Ser-1425) is a Phosphoserine. Thr-1514 bears the Phosphothreonine mark. Fibronectin type-III domains are found at residues 1514 to 1609 (TPTR…VHPQ) and 1627 to 1723 (APGP…SQDG). Ser-1776 bears the Phosphoserine mark.

This sequence belongs to the integrin beta chain family. In terms of assembly, heterodimer of an alpha and a beta subunit. Beta-4 associates with alpha-6. Interacts (via cytoplasmic region) with COL17A1 (via cytoplasmic region). Interacts (via cytoplasmic region) with DST isoform 3 (via N-terminus). Interacts (via cytoplasmic domain) with DST (via N-terminus). Interacts with RAC1. ITGA6:ITGB4 is found in a ternary complex with NRG1 and ERBB3. ITGA6:ITGB4 is found in a ternary complex with IGF1 and IGF1R. ITGA6:ITGB4 interacts with IGF2. Interacts with TMEM268; this interaction prevents ITGB4 degradation. Palmitoylated by DHHC3 at several cysteines of the membrane-proximal region, enhancing stability and cell surface expression. Palmitoylation also promotes secondary association with tertaspanins.

Its subcellular location is the cell membrane. The protein resides in the cell junction. It localises to the hemidesmosome. Functionally, integrin alpha-6/beta-4 is a receptor for laminin. It plays a critical structural role in the hemidesmosome of epithelial cells. Is required for the regulation of keratinocyte polarity and motility. ITGA6:ITGB4 binds to NRG1 (via EGF domain) and this binding is essential for NRG1-ERBB signaling. ITGA6:ITGB4 binds to IGF1 and this binding is essential for IGF1 signaling. ITGA6:ITGB4 binds to IGF2 and this binding is essential for IGF2 signaling. The polypeptide is Integrin beta-4 (Itgb4) (Rattus norvegicus (Rat)).